The chain runs to 148 residues: uncharacterized protein (148 aa).

Residues 1–17 (MCPPVRQRPAQAPPAKR) are compositionally biased toward low complexity. Disordered stretches follow at residues 1–86 (MCPP…VQSP) and 122–148 (RAHR…TSPC). Basic residues predominate over residues 38-57 (RPPKMQRRPRPPVAKRRRFP). Polar residues predominate over residues 134-148 (QSRQRPSPDSQTSPC).

The protein belongs to the Epstein-Barr virus BLLF2 family.

This is an uncharacterized protein from Homo sapiens (Human).